Here is a 46-residue protein sequence, read N- to C-terminus: Protein PsbN (46 aa).

The chain crosses the membrane as a helical span at residues 7–27 (ALSVALGVMAVVLGLTGFGVY).

It belongs to the PsbN family.

The protein localises to the cellular thylakoid membrane. May play a role in photosystem I and II biogenesis. This is Protein PsbN from Synechococcus sp. (strain CC9902).